The chain runs to 922 residues: Alpha-actinin, sarcomeric (922 aa).

Residues methionine 1 to histidine 252 form an actin-binding region. Calponin-homology (CH) domains follow at residues lysine 36–alanine 140 and methionine 149–glutamine 255. 4 Spectrin repeats span residues alanine 253–aspartate 393, isoleucine 394–arginine 508, isoleucine 509–leucine 629, and isoleucine 630–threonine 742. EF-hand domains follow at residues glutamate 776–serine 811 and glutamine 817–aspartate 852. Ca(2+) is bound by residues aspartate 789, asparagine 791, threonine 793, arginine 795, and glutamate 800.

This sequence belongs to the alpha-actinin family. As to quaternary structure, homodimer; antiparallel.

F-actin cross-linking protein which is thought to anchor actin to a variety of intracellular structures. This is a bundling protein. This Anopheles gambiae (African malaria mosquito) protein is Alpha-actinin, sarcomeric (Actn).